A 130-amino-acid polypeptide reads, in one-letter code: Small ribosomal subunit protein uS8 (130 aa).

This sequence belongs to the universal ribosomal protein uS8 family. In terms of assembly, part of the 30S ribosomal subunit. Contacts proteins S5 and S12.

Functionally, one of the primary rRNA binding proteins, it binds directly to 16S rRNA central domain where it helps coordinate assembly of the platform of the 30S subunit. The chain is Small ribosomal subunit protein uS8 from Alteromonas mediterranea (strain DSM 17117 / CIP 110805 / LMG 28347 / Deep ecotype).